A 243-amino-acid polypeptide reads, in one-letter code: Probable transcriptional regulatory protein BP2308 (243 aa).

The interval 1-21 (MAGHSKWANIQHRKGRQDAKR) is disordered.

This sequence belongs to the TACO1 family.

It is found in the cytoplasm. In Bordetella pertussis (strain Tohama I / ATCC BAA-589 / NCTC 13251), this protein is Probable transcriptional regulatory protein BP2308.